A 245-amino-acid polypeptide reads, in one-letter code: 8-amino-3,8-dideoxy-manno-octulosonate cytidylyltransferase (245 aa).

The protein belongs to the KdsB family.

It localises to the cytoplasm. The enzyme catalyses 8-amino-3,8-dideoxy-alpha-D-manno-octulosonate + CTP = CMP-8-amino-3,8-dideoxy-alpha-D-manno-oct-2-ulosonate + diphosphate. It functions in the pathway bacterial outer membrane biogenesis; lipopolysaccharide biosynthesis. Activates KDO8N (a required 8-carbon sugar) for incorporation into bacterial lipopolysaccharide in the Shewanella genus. The chain is 8-amino-3,8-dideoxy-manno-octulosonate cytidylyltransferase from Shewanella frigidimarina (strain NCIMB 400).